The primary structure comprises 638 residues: MSKVIGIDLGTTNSCVAIMEGGEPVVIANSEGSRTTPSMVAFAESGERLVGQQAKRQAVTNPENTLFAIKRLIGRKFDTDEVRKDISISPFKIVKADNGDAWVDVRGKMYSPPEVSAIVLQKMKKTAEDYLGETVTDAVITVPAYFNDSQRQATKDAGKIAGLNVLRIINEPTAAALAYGLDKKKDEKIAVFDLGGGTFDISILELGDGVFEVKSTNGDTFLGGEDFDQRVIDWIADEFKKDQGIDLRGDKMALQRLKEAAEKAKCELSSSMETDINLPFITADATGPKHLTMKLSRAKLEALCAELLDKLEGPCRTALKDAGLSPSEVDEVILVGGMTRMPAVQKRVQEIFGKAPNKGVNPDEVVAIGAGIQGGVLRGDVKDVLLLDVTPLSLGIETLGSVMTKLIDKNTTIPCRKSQVFSTASDNQPAVTIHVLQGEREMASDNKTLGNFELTGIPPAPRGVPQIEVTFDIDANGIVHVSAKDLGTGKEQSIRITASSGLSKEEIDKMVREAESHAADDKKKRELIEARNHADTLAYSTEKSLKEYGDKIGDDEKKKIEEAVAALKKAMEGDDVDAIKQATDALTQASHKLAEAVYAKTQTEGGAQPGAEADGDTGAKGGEKVVDADFEEVKDDKK.

Residue Thr198 is modified to Phosphothreonine; by autocatalysis. The tract at residues 600–638 (KTQTEGGAQPGAEADGDTGAKGGEKVVDADFEEVKDDKK) is disordered. The span at 628–638 (ADFEEVKDDKK) shows a compositional bias: acidic residues.

It belongs to the heat shock protein 70 family.

Functionally, acts as a chaperone. The polypeptide is Chaperone protein DnaK (Geobacter metallireducens (strain ATCC 53774 / DSM 7210 / GS-15)).